A 275-amino-acid polypeptide reads, in one-letter code: NADPH-dependent 7-cyano-7-deazaguanine reductase (275 aa).

Position 81–83 (81–83) interacts with substrate; sequence IES. Residue 83–84 coordinates NADPH; the sequence is SK. C181 functions as the Thioimide intermediate in the catalytic mechanism. D188 acts as the Proton donor in catalysis. Residue 220 to 221 coordinates substrate; sequence HE. Residue 249–250 coordinates NADPH; the sequence is RG.

Belongs to the GTP cyclohydrolase I family. QueF type 2 subfamily. As to quaternary structure, homodimer.

The protein resides in the cytoplasm. It carries out the reaction 7-aminomethyl-7-carbaguanine + 2 NADP(+) = 7-cyano-7-deazaguanine + 2 NADPH + 3 H(+). Its pathway is tRNA modification; tRNA-queuosine biosynthesis. Catalyzes the NADPH-dependent reduction of 7-cyano-7-deazaguanine (preQ0) to 7-aminomethyl-7-deazaguanine (preQ1). The protein is NADPH-dependent 7-cyano-7-deazaguanine reductase of Xylella fastidiosa (strain M23).